The primary structure comprises 573 residues: Developmental and secondary metabolism regulator VEL1 (573 aa).

The 195-residue stretch at 26 to 220 folds into the Velvet domain; sequence NRHLWYQLTV…ADQGCRVRIR (195 aa). The Nuclear localization signal signature appears at 40–45; sequence ERARAC. Residues 222–520 form a disordered region; sequence DVRMRKRDGK…STGGKRKHDH (299 aa). The span at 230–245 shows a compositional bias: basic and acidic residues; the sequence is GKGSGFDRRGEEEYSR. Composition is skewed to pro residues over residues 291–310 and 341–351; these read APPPLPPPPPSSYDAPPPAA and APIPPATPTGP. Over residues 352-363 the composition is skewed to low complexity; it reads YPTSSAAPSPYA. Residues 379 to 389 are compositionally biased toward pro residues; sequence PPAPSASPAPP. Residues 432–448 are compositionally biased toward polar residues; that stretch reads TPASQPTYSTPASQPTY. Positions 458–475 are enriched in pro residues; the sequence is SAPPPAPYSAPAPPPPRP. Residues 476-504 form a PEST region; it reads SMSQSSLAPLKIASLVSPLPPIEAQTEPL.

It belongs to the velvet family. VeA subfamily. Component of the heterotrimeric velvet complex composed of LAE1, VEL1 and VEL2; VEL1 acting as a bridging protein between LAE1 and VEL2. Interacts with LAE1.

The protein resides in the nucleus. Its subcellular location is the cytoplasm. In terms of biological role, component of the velvet transcription factor complex that controls sexual/asexual developmental ratio in response to light, promoting sexual development in the darkness while stimulating asexual sporulation under illumination. The velvet complex hat acts as a global regulator for secondary metabolite gene expression. Regulates expression of the carbohydrate-active enzyme gene clusters. This chain is Developmental and secondary metabolism regulator VEL1, found in Hypocrea jecorina (strain QM6a) (Trichoderma reesei).